Here is a 334-residue protein sequence, read N- to C-terminus: Formamidase (334 aa).

The region spanning 14–260 is the CN hydrolase domain; sequence FLVAAIQFPV…WEIVTGEIYP (247 aa). The active-site Proton acceptor is the Glu-60. The Proton donor role is filled by Lys-133. Residue Cys-166 is the Nucleophile of the active site.

This sequence belongs to the carbon-nitrogen hydrolase superfamily. Aliphatic amidase family.

It carries out the reaction formamide + H2O = formate + NH4(+). Functionally, is an aliphatic amidase with a restricted substrate specificity, as it only hydrolyzes formamide. This is Formamidase from Helicobacter pylori (strain Shi470).